We begin with the raw amino-acid sequence, 620 residues long: Glutathione-regulated potassium-efflux system protein KefC (620 aa).

Topologically, residues 1-3 (MDS) are periplasmic. A helical transmembrane segment spans residues 4-24 (HTLIQALIYLGSAALIVPIAV). Position 25 (Arg-25) is a topological domain, cytoplasmic. The chain crosses the membrane as a helical span at residues 26–46 (LGLGSVLGYLIAGCIIGPWGL). Residues 47 to 53 (RLVTDAE) lie on the Periplasmic side of the membrane. A helical transmembrane segment spans residues 54–74 (SILHFAEIGVVLMLFIIGLEL). The Cytoplasmic segment spans residues 75–89 (DPQRLWKLRAAVFGG). Residues 90 to 110 (GALQMVICGGLLGLFCMLLGL) traverse the membrane as a helical segment. Over 111–113 (RWQ) the chain is Periplasmic. The chain crosses the membrane as a helical span at residues 114–134 (VAELIGMTLALSSTAIAMQAM). Topologically, residues 135–148 (NERNLMVTQMGRSA) are cytoplasmic. A helical transmembrane segment spans residues 149 to 169 (FAVLLFQDIAAIPLVAMIPLL). The Periplasmic segment spans residues 170–177 (AASSASTT). Residues 178-198 (MGAFVLSALKVAGALALVVLL) form a helical membrane-spanning segment. Residues 199–213 (GRYVTRPALRFVARS) are Cytoplasmic-facing. A helical membrane pass occupies residues 214-233 (GLREVFSAVALFLVFGFGLL). The Periplasmic portion of the chain corresponds to 234–236 (LEE). The chain crosses the membrane as a helical span at residues 237 to 254 (VGLSMAMGAFLAGVLLAS). At 255-269 (SEYRHALESDIEPFK) the chain is on the cytoplasmic side. Residues 270-290 (GLLLGLFFIGVGMSIDFGTLL) traverse the membrane as a helical segment. The Periplasmic segment spans residues 291–293 (ENP). A helical transmembrane segment spans residues 294–314 (LRIVILLLGFLIIKIAMLWLI). At 315–326 (ARPLQVPNKQRR) the chain is on the cytoplasmic side. A helical transmembrane segment spans residues 327 to 347 (WFAVLLGQGSEFAFVVFGAAQ). Residues 348-358 (MANVLEPEWAK) are Periplasmic-facing. The chain crosses the membrane as a helical span at residues 359–379 (SLTLAVALSMAATPILLVILN). Over 380–620 (RLEQSSTEEA…ADEPETKPSS (241 aa)) the chain is Cytoplasmic. Residues 399–518 (QPRVIIAGFG…AGVEKPERET (120 aa)) form the RCK N-terminal domain. Residues 597–620 (GWQGTEEGKHTGNMADEPETKPSS) are disordered.

Belongs to the monovalent cation:proton antiporter 2 (CPA2) transporter (TC 2.A.37) family. KefC subfamily. In terms of assembly, homodimer. Interacts with the regulatory subunit KefF.

It localises to the cell inner membrane. Functionally, pore-forming subunit of a potassium efflux system that confers protection against electrophiles. Catalyzes K(+)/H(+) antiport. This chain is Glutathione-regulated potassium-efflux system protein KefC, found in Escherichia coli O6:H1 (strain CFT073 / ATCC 700928 / UPEC).